The primary structure comprises 88 residues: Phosphocarrier protein HPr (88 aa).

Residues 1–88 (MEKKEFHIVA…ETLQKEGLAE (88 aa)) enclose the HPr domain. Catalysis depends on H15, which acts as the Pros-phosphohistidine intermediate. Residue S46 is modified to Phosphoserine; by HPrK/P.

This sequence belongs to the HPr family. As to quaternary structure, monomer.

Its subcellular location is the cytoplasm. Its activity is regulated as follows. Phosphorylation on Ser-46 inhibits the phosphoryl transfer from enzyme I to HPr. General (non sugar-specific) component of the phosphoenolpyruvate-dependent sugar phosphotransferase system (sugar PTS). This major carbohydrate active-transport system catalyzes the phosphorylation of incoming sugar substrates concomitantly with their translocation across the cell membrane. The phosphoryl group from phosphoenolpyruvate (PEP) is transferred to the phosphoryl carrier protein HPr by enzyme I. Phospho-HPr then transfers it to the PTS EIIA domain. Its function is as follows. P-Ser-HPr interacts with the catabolite control protein A (CcpA), forming a complex that binds to DNA at the catabolite response elements cre, operator sites preceding a large number of catabolite-regulated genes. Thus, P-Ser-HPr is a corepressor in carbon catabolite repression (CCR), a mechanism that allows bacteria to coordinate and optimize the utilization of available carbon sources. P-Ser-HPr also plays a role in inducer exclusion, in which it probably interacts with several non-PTS permeases and inhibits their transport activity. The chain is Phosphocarrier protein HPr (ptsH) from Enterococcus faecalis (strain ATCC 700802 / V583).